Consider the following 368-residue polypeptide: Probable magnesium transporter (368 aa).

Residues 1–4 are Extracellular-facing; the sequence is MEDK. Residues 5-25 form a helical membrane-spanning segment; that stretch reads YIGLALAMSSSLAIGTSFIIT. Over 26 to 50 the chain is Cytoplasmic; sequence KKGLMDASARTGGTDGVQASDYLQN. Residues 51–71 form a helical membrane-spanning segment; it reads PIWWGGMITMAIGEIANFAAY. The Extracellular portion of the chain corresponds to 72-76; sequence TFAPA. The chain crosses the membrane as a helical span at residues 77 to 97; that stretch reads ILVTPLGALSVIIGAVLAAIF. Residues 98–101 lie on the Cytoplasmic side of the membrane; it reads LKER. Residues 102–122 form a helical membrane-spanning segment; it reads LGTLGKMGCAICLMGSVIIIL. Residues 123–143 lie on the Extracellular side of the membrane; that stretch reads HAPPDKEVQTVDEILGYATQP. A helical membrane pass occupies residues 144-164; the sequence is GFMFYCTVVTLYSLFMIYKIV. Residues 165–175 are Cytoplasmic-facing; it reads PKYGNTNPMIY. The chain crosses the membrane as a helical span at residues 176 to 196; the sequence is LSICSSVGSISVMSIKAFGIA. Residues 197–206 are Extracellular-facing; it reads LKLTLGGNNQ. A helical membrane pass occupies residues 207–227; the sequence is FTHVSTYLFLIVVALCIVTQM. Residues 228–240 are Cytoplasmic-facing; sequence NYFNKALDQFDTS. The chain crosses the membrane as a helical span at residues 241–261; it reads IVNPLYYVTFTTFTLAASFIL. The Extracellular portion of the chain corresponds to 262 to 269; that stretch reads FKGFNTSS. N266 is a glycosylation site (N-linked (GlcNAc...) asparagine). Residues 270 to 290 traverse the membrane as a helical segment; sequence AVDIISLLIGFLIIFSGVYLL. The Cytoplasmic segment spans residues 291 to 368; sequence NISRSESPMV…GDEDTRNYRH (78 aa).

It belongs to the NIPA family.

The protein localises to the cell membrane. It is found in the early endosome. It carries out the reaction Mg(2+)(in) = Mg(2+)(out). Functionally, probably acts as a selective Mg(2+) transporter. Plays a role in cell wall integrity and in engulfment by host macrophages. The sequence is that of Probable magnesium transporter from Candida albicans (strain SC5314 / ATCC MYA-2876) (Yeast).